Here is a 498-residue protein sequence, read N- to C-terminus: Galactose-1-phosphate uridylyltransferase (498 aa).

The protein belongs to the galactose-1-phosphate uridylyltransferase type 2 family.

The protein localises to the cytoplasm. The enzyme catalyses alpha-D-galactose 1-phosphate + UDP-alpha-D-glucose = alpha-D-glucose 1-phosphate + UDP-alpha-D-galactose. The protein operates within carbohydrate metabolism; galactose metabolism. The polypeptide is Galactose-1-phosphate uridylyltransferase (Latilactobacillus sakei subsp. sakei (strain 23K) (Lactobacillus sakei subsp. sakei)).